Reading from the N-terminus, the 101-residue chain is Large ribosomal subunit protein bL28 (101 aa).

Belongs to the bacterial ribosomal protein bL28 family.

This chain is Large ribosomal subunit protein bL28, found in Rhodopseudomonas palustris (strain ATCC BAA-98 / CGA009).